A 137-amino-acid chain; its full sequence is Nucleoside diphosphate kinase (137 aa).

Residues Lys10, Phe58, Arg86, Thr92, Arg103, and Asn113 each coordinate ATP. The active-site Pros-phosphohistidine intermediate is the His116.

It belongs to the NDK family. Homotetramer. The cofactor is Mg(2+).

The protein localises to the cytoplasm. The catalysed reaction is a 2'-deoxyribonucleoside 5'-diphosphate + ATP = a 2'-deoxyribonucleoside 5'-triphosphate + ADP. It carries out the reaction a ribonucleoside 5'-diphosphate + ATP = a ribonucleoside 5'-triphosphate + ADP. In terms of biological role, major role in the synthesis of nucleoside triphosphates other than ATP. The ATP gamma phosphate is transferred to the NDP beta phosphate via a ping-pong mechanism, using a phosphorylated active-site intermediate. This Helicobacter acinonychis (strain Sheeba) protein is Nucleoside diphosphate kinase.